We begin with the raw amino-acid sequence, 106 residues long: UPF0145 protein CTC_01500 (106 aa).

Belongs to the UPF0145 family.

The protein is UPF0145 protein CTC_01500 of Clostridium tetani (strain Massachusetts / E88).